Here is a 356-residue protein sequence, read N- to C-terminus: MSDEKQKKSVLEKALKRIEENFGKGSIMILGDETQVQPVEVIPTGSLAIDIATGVGGYPRGRIVEIFGQESSGKTTLALHAIAEAQKMGGVAAFIDAEHALDPVYAKNLGVDLKSLLISQPDHGEQALEIVDELVRSGVVDLIVVDSVAALVPRAEIEGAMGDMQVGLQARLMSQALRKIAGSVNKSKAVVIFTNQIRMKIGVMFGSPETTTGGLALKFYATMRMEVRRGEPIKEGKDVIGNVISVKIVKNKVAPPFKTAQTYIIYGKGIDREYELFNIAVEESMVERKGSWYYYTTLKGEEVSLGQGSSNAVQFLKDNPEIAGEIERRIREKYGLLSVEKEEQKKEEKSSDEEAS.

ATP is bound at residue 68-75 (GQESSGKT).

The protein belongs to the RecA family.

Its subcellular location is the cytoplasm. Its function is as follows. Can catalyze the hydrolysis of ATP in the presence of single-stranded DNA, the ATP-dependent uptake of single-stranded DNA by duplex DNA, and the ATP-dependent hybridization of homologous single-stranded DNAs. It interacts with LexA causing its activation and leading to its autocatalytic cleavage. The sequence is that of Protein RecA from Thermotoga petrophila (strain ATCC BAA-488 / DSM 13995 / JCM 10881 / RKU-1).